A 212-amino-acid polypeptide reads, in one-letter code: Cyclin-dependent kinase inhibitor 3 (212 aa).

The interval 1 to 24 (MKPPISIQASEFDSSDEEPADDEQ) is disordered. The tract at residues 1–34 (MKPPISIQASEFDSSDEEPADDEQTPIQISWLPL) is interaction with CDK2. Over residues 13–24 (DSSDEEPADDEQ) the composition is skewed to acidic residues. The region spanning 32–201 (LPLSRVNCSQ…FRDKLAAYLS (170 aa)) is the Tyrosine-protein phosphatase domain. Cysteine 140 (phosphocysteine intermediate) is an active-site residue.

It belongs to the protein-tyrosine phosphatase family. In terms of assembly, interacts with cyclin-dependent kinases such as CDK1, CDK2 and CDK3. Does not interact with CDK4. Interacts (via C-terminus) with phosphorylated CDK2 (via C-terminal helix). Interacts with MS4A3 (via C-terminus); the interaction enhances CDKN3 enzymatic activity.

It is found in the cytoplasm. It localises to the perinuclear region. The catalysed reaction is O-phospho-L-tyrosyl-[protein] + H2O = L-tyrosyl-[protein] + phosphate. It carries out the reaction O-phospho-L-seryl-[protein] + H2O = L-seryl-[protein] + phosphate. It catalyses the reaction O-phospho-L-threonyl-[protein] + H2O = L-threonyl-[protein] + phosphate. In terms of biological role, may play a role in cell cycle regulation. Dual specificity phosphatase active toward substrates containing either phosphotyrosine or phosphoserine residues. Dephosphorylates CDK2 at 'Thr-160' in a cyclin-dependent manner. The sequence is that of Cyclin-dependent kinase inhibitor 3 from Rattus norvegicus (Rat).